We begin with the raw amino-acid sequence, 236 residues long: 2-C-methyl-D-erythritol 4-phosphate cytidylyltransferase (236 aa).

Belongs to the IspD/TarI cytidylyltransferase family. IspD subfamily.

It carries out the reaction 2-C-methyl-D-erythritol 4-phosphate + CTP + H(+) = 4-CDP-2-C-methyl-D-erythritol + diphosphate. It participates in isoprenoid biosynthesis; isopentenyl diphosphate biosynthesis via DXP pathway; isopentenyl diphosphate from 1-deoxy-D-xylulose 5-phosphate: step 2/6. Catalyzes the formation of 4-diphosphocytidyl-2-C-methyl-D-erythritol from CTP and 2-C-methyl-D-erythritol 4-phosphate (MEP). The polypeptide is 2-C-methyl-D-erythritol 4-phosphate cytidylyltransferase (Burkholderia orbicola (strain AU 1054)).